The chain runs to 184 residues: TATA-box-binding protein (184 aa).

Repeat copies occupy residues 9–85 (IENI…IDKL) and 100–178 (VQNI…KKDL).

It belongs to the TBP family.

Its function is as follows. General factor that plays a role in the activation of archaeal genes transcribed by RNA polymerase. Binds specifically to the TATA box promoter element which lies close to the position of transcription initiation. In Picrophilus torridus (strain ATCC 700027 / DSM 9790 / JCM 10055 / NBRC 100828 / KAW 2/3), this protein is TATA-box-binding protein.